Consider the following 335-residue polypeptide: Replication factor C subunit 4 (335 aa).

56–63 (SGPPGTGK) contacts ATP.

It belongs to the activator 1 small subunits family. As to quaternary structure, heterotetramer of subunits RFC2, RFC3, RFC4 and RFC5 that can form a complex with RFC1. As to expression, expressed in roots, leaves, shoot apical meristem (SAM), flag leaves and panicles.

It is found in the nucleus. May be involved in DNA replication and thus regulate cell proliferation. The protein is Replication factor C subunit 4 (RFC4) of Oryza sativa subsp. japonica (Rice).